The sequence spans 503 residues: Methylthioalkylmalate synthase 3, chloroplastic (503 aa).

A chloroplast-targeting transit peptide spans 1–51 (MASLLLTSSSMITTSCRSMVLRSGLPIGSSFPSLRLTRPYDKATLFVSCCS). The region spanning 85–359 (VRVLDTTLRD…YTKIDSRQIM (275 aa)) is the Pyruvate carboxyltransferase domain.

Belongs to the alpha-IPM synthase/homocitrate synthase family. Requires Mn(2+) as cofactor. In terms of tissue distribution, highly expressed in roots, leaves, and siliques. Lower amounts in stems and flowers.

It is found in the plastid. Its subcellular location is the chloroplast. It catalyses the reaction an omega-(methylsulfanyl)-2-oxoalkanoate + acetyl-CoA + H2O = a 2-(omega-methylsulfanyl)alkylmalate + CoA + H(+). Not activated by ATP. Functionally, determines the side chain length of aliphatic glucosinolate structures. Accepts all the omega-methylthio-2-oxoalkanoic acids needed to form the known C3 to C8 glucosinolates. Also able to convert pyruvate to citramalate, 2-oxoisovalerate to isopropylmalate, 4-methyl-2-oxopentanoate and 5-methyl-2-oxohexanoate for Leu-derived glucosinolates, 3-methyl-2-oxopentanoate for Ile-derived glucosinolates and phenylpyruvate to phenylethylglucosinolate. The sequence is that of Methylthioalkylmalate synthase 3, chloroplastic (MAM3) from Arabidopsis thaliana (Mouse-ear cress).